A 683-amino-acid polypeptide reads, in one-letter code: Long-chain-fatty-acid--CoA ligase 5 (683 aa).

Residues 12–32 (LPTPALICILTFGAAIFLWLI) traverse the membrane as a helical; Signal-anchor for type III membrane protein segment. Ile32 carries the post-translational modification Phosphoserine. The Cytoplasmic portion of the chain corresponds to 33 to 683 (TRPQPVLPLL…IDSLYEHIQD (651 aa)). Position 361 is an N6-acetyllysine (Lys361).

This sequence belongs to the ATP-dependent AMP-binding enzyme family. Mg(2+) serves as cofactor.

The protein resides in the mitochondrion. The protein localises to the endoplasmic reticulum. Its subcellular location is the mitochondrion outer membrane. It localises to the endoplasmic reticulum membrane. It is found in the cell membrane. It catalyses the reaction a long-chain fatty acid + ATP + CoA = a long-chain fatty acyl-CoA + AMP + diphosphate. The enzyme catalyses (5Z,8Z,11Z,14Z)-eicosatetraenoate + ATP + CoA = (5Z,8Z,11Z,14Z)-eicosatetraenoyl-CoA + AMP + diphosphate. The catalysed reaction is hexadecanoate + ATP + CoA = hexadecanoyl-CoA + AMP + diphosphate. It carries out the reaction (E)-hexadec-2-enoate + ATP + CoA = (2E)-hexadecenoyl-CoA + AMP + diphosphate. It catalyses the reaction 15-hydroxy-(5Z,8Z,11Z,13E)-eicosatetraenoate + ATP + CoA = 15-hydroxy-(5Z,8Z,11Z,13E)-eicosatetraenoyl-CoA + AMP + diphosphate. The enzyme catalyses 12-hydroxy-(5Z,8Z,10E,14Z)-eicosatetraenoate + ATP + CoA = 12-hydroxy-(5Z,8Z,10E,14Z)-eicosatetraenoyl-CoA + AMP + diphosphate. The catalysed reaction is 5-hydroxy-(6E,8Z,11Z,14Z)-eicosatetraenoate + ATP + CoA = 5-hydroxy-(6E,8Z,11Z,14Z)-eicosatetraenoyl-CoA + AMP + diphosphate. It carries out the reaction 14,15-epoxy-(5Z,8Z,11Z)-eicosatrienoate + ATP + CoA = 14,15-epoxy-(5Z,8Z,11Z)-eicosatrienoyl-CoA + AMP + diphosphate. It catalyses the reaction 11,12-epoxy-(5Z,8Z,14Z)-eicosatrienoate + ATP + CoA = 11,12-epoxy-(5Z,8Z,14Z)-eicosatrienoyl-CoA + AMP + diphosphate. The enzyme catalyses (9Z)-octadecenoate + ATP + CoA = (9Z)-octadecenoyl-CoA + AMP + diphosphate. In terms of biological role, catalyzes the conversion of long-chain fatty acids to their active form acyl-CoAs for both synthesis of cellular lipids, and degradation via beta-oxidation. ACSL5 may activate fatty acids from exogenous sources for the synthesis of triacylglycerol destined for intracellular storage. Utilizes a wide range of saturated fatty acids with a preference for C16-C18 unsaturated fatty acids. It was suggested that it may also stimulate fatty acid oxidation. At the villus tip of the crypt-villus axis of the small intestine may sensitize epithelial cells to apoptosis specifically triggered by the death ligand TRAIL. May have a role in the survival of glioma cells. The chain is Long-chain-fatty-acid--CoA ligase 5 from Homo sapiens (Human).